Consider the following 100-residue polypeptide: Elastin (100 aa).

Residues Pro72 and Pro86 each carry the 4-hydroxyproline modification. The cysteines at positions 90 and 95 are disulfide-linked.

This sequence belongs to the elastin family. As to quaternary structure, the polymeric elastin chains are cross-linked together into an extensible 3D network. Forms a ternary complex with BGN and MFAP2. Interacts with MFAP2 via divalent cations (calcium &gt; magnesium &gt; manganese) in a dose-dependent and saturating manner. Interacts with FBLN5 and FBN1. Forms a ternary complex with FBN1 and FBLN2 or FBLN5. Interacts with MFAP4 in a Ca (2+)-dependent manner; this interaction promotes ELN self-assembly. Interacts with EFEMP2 with moderate affinity. In terms of processing, elastin is formed through the cross-linking of its soluble precursor tropoelastin. Cross-linking is initiated through the action of lysyl oxidase on exposed lysines to form allysine. Subsequent spontaneous condensation reactions with other allysine or unmodified lysine residues result in various bi-, tri-, and tetrafunctional cross-links. The most abundant cross-links in mature elastin fibers are lysinonorleucine, allysine aldol, desmosine, and isodesmosine. Post-translationally, hydroxylation on proline residues within the sequence motif, GXPG, is most likely to be 4-hydroxy as this fits the requirement for 4-hydroxylation in vertebrates.

The protein localises to the secreted. Its subcellular location is the extracellular space. The protein resides in the extracellular matrix. Major structural protein of tissues such as aorta and nuchal ligament, which must expand rapidly and recover completely. Molecular determinant of the late arterial morphogenesis, stabilizing arterial structure by regulating proliferation and organization of vascular smooth muscle. The polypeptide is Elastin (ELN) (Ovis aries (Sheep)).